We begin with the raw amino-acid sequence, 443 residues long: Minovincinine 19-hydroxy-O-acetyltransferase (443 aa).

Catalysis depends on His157, which acts as the Proton acceptor. The Nuclear localization signal motif lies at 215–222 (RKRFLFSP). A coiled-coil region spans residues 316–343 (TKLVIGELRKAKDKLKNLSQEKLNYVAR). Asp384 serves as the catalytic Proton acceptor.

Belongs to the plant acyltransferase family. Monomer. As to expression, expressed in cortical cells of the root tip, especially in hairy roots, as well as in etiolated seedlings. Mostly expressed in roots, and, at lower levels, in leaves.

The protein resides in the cytoplasm. It localises to the nucleus. It carries out the reaction (+)-minovincinine + acetyl-CoA = (+)-echitovenine + CoA. It participates in alkaloid biosynthesis. In terms of biological role, component of the monoterpenoid indole alkaloids (MIAs, e.g. echitovenine, tabersonine, lochnericine, 19-hydroxytabersonine and horhammericine) biosynthetic pathway; MIAs are used in cancer treatment and other medical applications. Acyltransferase catalyzing the conversion of (+)-minovincinine to (+)-echitovenine. The protein is Minovincinine 19-hydroxy-O-acetyltransferase of Catharanthus roseus (Madagascar periwinkle).